A 65-amino-acid chain; its full sequence is Hirudin-3B (65 aa).

Residues 1-3 (VVY) form an interaction with thrombin active site region. 3 disulfide bridges follow: C6–C14, C16–C28, and C22–C39. Residues 40 to 65 (VTGEGTPKPQSHNDGDFEEIPEEYLQ) are disordered. O-linked (GalNAc...) threonine glycosylation is present at T45. An interaction with fibrinogen-binding exosite of thrombin region spans residues 55 to 65 (DFEEIPEEYLQ). Positions 55–65 (DFEEIPEEYLQ) are enriched in acidic residues. Y63 carries the sulfotyrosine modification.

This sequence belongs to the protease inhibitor I14 (hirudin) family.

It localises to the secreted. Hirudin is a potent thrombin-specific protease inhibitor. It forms a stable non-covalent complex with alpha-thrombin, thereby abolishing its ability to cleave fibrinogen. In Hirudo medicinalis (Medicinal leech), this protein is Hirudin-3B.